The primary structure comprises 176 residues: Inner membrane-spanning protein YciB (176 aa).

5 helical membrane-spanning segments follow: residues 24–44 (TATA…AFRH), 49–69 (PMLW…LVLH), 76–96 (WKPT…QLAF), 119–139 (LNVV…FVAY), and 149–169 (FKLF…SLWL).

Belongs to the YciB family.

Its subcellular location is the cell inner membrane. Plays a role in cell envelope biogenesis, maintenance of cell envelope integrity and membrane homeostasis. This Paraburkholderia xenovorans (strain LB400) protein is Inner membrane-spanning protein YciB.